The primary structure comprises 606 residues: Polyphenol oxidase A1, chloroplastic (606 aa).

The transit peptide at 1–92 directs the protein to the chloroplast; it reads MTSISALSFI…TLATNPSALA (92 aa). Positions 32–63 are disordered; sequence KQHQSSKLRKPKRQVTCSSNNNQNNPKEEQEL. Residues 35 to 44 show a composition bias toward basic residues; the sequence is QSSKLRKPKR. 2 disulfide bridges follow: Cys103/Cys121 and Cys120/Cys182. Residues His181, His202, His211, His333, His337, and His367 each coordinate Cu cation. A cross-link (2'-(S-cysteinyl)-histidine (Cys-His)) is located at residues 185-202; it reads CDGAYSQIGFPDLKLQVH.

The protein belongs to the tyrosinase family. It depends on Cu(2+) as a cofactor.

The protein localises to the plastid. The protein resides in the chloroplast thylakoid lumen. It catalyses the reaction 2 catechol + O2 = 2 1,2-benzoquinone + 2 H2O. Catalyzes the oxidation of mono- and o-diphenols to o-diquinones. The chain is Polyphenol oxidase A1, chloroplastic from Vicia faba (Broad bean).